A 568-amino-acid polypeptide reads, in one-letter code: Clathrin coat assembly protein AP180B (568 aa).

Positions 1 to 127 constitute an ENTH domain; that stretch reads MSSLYTKLVK…EEYGRLGMDH (127 aa). The segment covering 262 to 283 has biased composition (basic and acidic residues); the sequence is HLREETKRQRGEPSEPQQDRKP. Positions 262 to 302 are disordered; it reads HLREETKRQRGEPSEPQQDRKPSTAISSTSSHNNNSNDKNK. Residue lysine 282 forms a Glycyl lysine isopeptide (Lys-Gly) (interchain with G-Cter in ubiquitin) linkage. The segment covering 284–298 has biased composition (low complexity); that stretch reads STAISSTSSHNNNSN. Threonine 449 carries the post-translational modification Phosphothreonine.

The protein belongs to the AP180 family. Interacts with PAN1 and the clathrin heavy and light chains CHC1 and CLC1.

The protein localises to the bud. Its subcellular location is the bud neck. It is found in the cell membrane. The protein resides in the cytoplasm. In terms of biological role, involved in endocytosis and clathrin cage assembly. The chain is Clathrin coat assembly protein AP180B (YAP1802) from Saccharomyces cerevisiae (strain ATCC 204508 / S288c) (Baker's yeast).